The following is a 206-amino-acid chain: Small ribosomal subunit protein uS4 (206 aa).

One can recognise an S4 RNA-binding domain in the interval 96-156 (TRLDNVVYRM…EKSRTQARIK (61 aa)).

It belongs to the universal ribosomal protein uS4 family. As to quaternary structure, part of the 30S ribosomal subunit. Contacts protein S5. The interaction surface between S4 and S5 is involved in control of translational fidelity.

Its function is as follows. One of the primary rRNA binding proteins, it binds directly to 16S rRNA where it nucleates assembly of the body of the 30S subunit. With S5 and S12 plays an important role in translational accuracy. The chain is Small ribosomal subunit protein uS4 from Shewanella sp. (strain ANA-3).